The sequence spans 356 residues: Holliday junction branch migration complex subunit RuvB (356 aa).

A large ATPase domain (RuvB-L) region spans residues 4-191 (TDKLATEQRI…FGIVARLEFY (188 aa)). ATP-binding positions include leucine 30, arginine 31, glycine 72, lysine 75, threonine 76, threonine 77, 138–140 (EDY), arginine 181, tyrosine 191, and arginine 228. Threonine 76 contributes to the Mg(2+) binding site. A small ATPAse domain (RuvB-S) region spans residues 192 to 262 (DAEQLSRIVR…VADAALAMLD (71 aa)). The segment at 265-356 (PVGFDLMDRK…RDEWDTPDGK (92 aa)) is head domain (RuvB-H). Arginine 301, arginine 320, and arginine 325 together coordinate DNA.

Belongs to the RuvB family. Homohexamer. Forms an RuvA(8)-RuvB(12)-Holliday junction (HJ) complex. HJ DNA is sandwiched between 2 RuvA tetramers; dsDNA enters through RuvA and exits via RuvB. An RuvB hexamer assembles on each DNA strand where it exits the tetramer. Each RuvB hexamer is contacted by two RuvA subunits (via domain III) on 2 adjacent RuvB subunits; this complex drives branch migration. In the full resolvosome a probable DNA-RuvA(4)-RuvB(12)-RuvC(2) complex forms which resolves the HJ.

The protein resides in the cytoplasm. The catalysed reaction is ATP + H2O = ADP + phosphate + H(+). Functionally, the RuvA-RuvB-RuvC complex processes Holliday junction (HJ) DNA during genetic recombination and DNA repair, while the RuvA-RuvB complex plays an important role in the rescue of blocked DNA replication forks via replication fork reversal (RFR). RuvA specifically binds to HJ cruciform DNA, conferring on it an open structure. The RuvB hexamer acts as an ATP-dependent pump, pulling dsDNA into and through the RuvAB complex. RuvB forms 2 homohexamers on either side of HJ DNA bound by 1 or 2 RuvA tetramers; 4 subunits per hexamer contact DNA at a time. Coordinated motions by a converter formed by DNA-disengaged RuvB subunits stimulates ATP hydrolysis and nucleotide exchange. Immobilization of the converter enables RuvB to convert the ATP-contained energy into a lever motion, pulling 2 nucleotides of DNA out of the RuvA tetramer per ATP hydrolyzed, thus driving DNA branch migration. The RuvB motors rotate together with the DNA substrate, which together with the progressing nucleotide cycle form the mechanistic basis for DNA recombination by continuous HJ branch migration. Branch migration allows RuvC to scan DNA until it finds its consensus sequence, where it cleaves and resolves cruciform DNA. This Burkholderia cenocepacia (strain HI2424) protein is Holliday junction branch migration complex subunit RuvB.